A 448-amino-acid chain; its full sequence is Exodeoxyribonuclease 7 large subunit (448 aa).

Belongs to the XseA family. In terms of assembly, heterooligomer composed of large and small subunits.

It localises to the cytoplasm. It carries out the reaction Exonucleolytic cleavage in either 5'- to 3'- or 3'- to 5'-direction to yield nucleoside 5'-phosphates.. Its function is as follows. Bidirectionally degrades single-stranded DNA into large acid-insoluble oligonucleotides, which are then degraded further into small acid-soluble oligonucleotides. The chain is Exodeoxyribonuclease 7 large subunit from Shewanella sp. (strain MR-4).